We begin with the raw amino-acid sequence, 218 residues long: Phosphoenolpyruvate guanylyltransferase (218 aa).

Phosphoenolpyruvate contacts are provided by T151, G166, and S169.

Belongs to the CofC family.

The catalysed reaction is phosphoenolpyruvate + GTP + H(+) = enolpyruvoyl-2-diphospho-5'-guanosine + diphosphate. It functions in the pathway cofactor biosynthesis; coenzyme F420 biosynthesis. Functionally, guanylyltransferase that catalyzes the activation of phosphoenolpyruvate (PEP) as enolpyruvoyl-2-diphospho-5'-guanosine, via the condensation of PEP with GTP. It is involved in the biosynthesis of coenzyme F420, a hydride carrier cofactor. In Mycobacterium sp. (strain KMS), this protein is Phosphoenolpyruvate guanylyltransferase.